Reading from the N-terminus, the 399-residue chain is Exodeoxyribonuclease 7 large subunit (399 aa).

The protein belongs to the XseA family. As to quaternary structure, heterooligomer composed of large and small subunits.

Its subcellular location is the cytoplasm. The catalysed reaction is Exonucleolytic cleavage in either 5'- to 3'- or 3'- to 5'-direction to yield nucleoside 5'-phosphates.. In terms of biological role, bidirectionally degrades single-stranded DNA into large acid-insoluble oligonucleotides, which are then degraded further into small acid-soluble oligonucleotides. This chain is Exodeoxyribonuclease 7 large subunit, found in Clostridium acetobutylicum (strain ATCC 824 / DSM 792 / JCM 1419 / IAM 19013 / LMG 5710 / NBRC 13948 / NRRL B-527 / VKM B-1787 / 2291 / W).